The following is a 503-amino-acid chain: Maturase K (503 aa).

Belongs to the intron maturase 2 family. MatK subfamily.

The protein localises to the plastid. It localises to the chloroplast. Usually encoded in the trnK tRNA gene intron. Probably assists in splicing its own and other chloroplast group II introns. In Stangeria eriopus (Natal grass cycad), this protein is Maturase K.